Here is a 1235-residue protein sequence, read N- to C-terminus: ATP-dependent helicase/nuclease subunit A (1235 aa).

The region spanning 3–471 is the UvrD-like helicase ATP-binding domain; sequence TKWTETQKSA…IKLSENFRSR (469 aa). ATP is bound at residue 24–31; that stretch reads AGAGTGKT. Positions 509-808 constitute a UvrD-like helicase C-terminal domain; the sequence is PFEGNCGGDV…RIMSIHKSKG (300 aa).

It belongs to the helicase family. AddA subfamily. In terms of assembly, heterodimer of AddA and AddB/RexB. It depends on Mg(2+) as a cofactor.

The enzyme catalyses Couples ATP hydrolysis with the unwinding of duplex DNA by translocating in the 3'-5' direction.. It carries out the reaction ATP + H2O = ADP + phosphate + H(+). In terms of biological role, the heterodimer acts as both an ATP-dependent DNA helicase and an ATP-dependent, dual-direction single-stranded exonuclease. Recognizes the chi site generating a DNA molecule suitable for the initiation of homologous recombination. The AddA nuclease domain is required for chi fragment generation; this subunit has the helicase and 3' -&gt; 5' nuclease activities. The polypeptide is ATP-dependent helicase/nuclease subunit A (Clostridium kluyveri (strain ATCC 8527 / DSM 555 / NBRC 12016 / NCIMB 10680 / K1)).